Consider the following 108-residue polypeptide: Small ribosomal subunit protein mS33 (108 aa).

Positions Leu84–Lys108 are disordered.

The protein belongs to the mitochondrion-specific ribosomal protein mS33 family. In terms of assembly, component of the mitochondrial small ribosomal subunit (mt-SSU). Mature N.crassa 74S mitochondrial ribosomes consist of a small (37S) and a large (54S) subunit. The 37S small subunit contains a 16S ribosomal RNA (16S mt-rRNA) and 32 different proteins. The 54S large subunit contains a 23S rRNA (23S mt-rRNA) and 42 different proteins.

Its subcellular location is the mitochondrion. Functionally, component of the mitochondrial ribosome (mitoribosome), a dedicated translation machinery responsible for the synthesis of mitochondrial genome-encoded proteins, including at least some of the essential transmembrane subunits of the mitochondrial respiratory chain. The mitoribosomes are attached to the mitochondrial inner membrane and translation products are cotranslationally integrated into the membrane. In Neurospora crassa (strain ATCC 24698 / 74-OR23-1A / CBS 708.71 / DSM 1257 / FGSC 987), this protein is Small ribosomal subunit protein mS33 (rsm27).